The primary structure comprises 208 residues: Probable nicotinate-nucleotide adenylyltransferase (208 aa).

It belongs to the NadD family.

It catalyses the reaction nicotinate beta-D-ribonucleotide + ATP + H(+) = deamido-NAD(+) + diphosphate. It functions in the pathway cofactor biosynthesis; NAD(+) biosynthesis; deamido-NAD(+) from nicotinate D-ribonucleotide: step 1/1. Its function is as follows. Catalyzes the reversible adenylation of nicotinate mononucleotide (NaMN) to nicotinic acid adenine dinucleotide (NaAD). This is Probable nicotinate-nucleotide adenylyltransferase from Acidothermus cellulolyticus (strain ATCC 43068 / DSM 8971 / 11B).